A 192-amino-acid polypeptide reads, in one-letter code: UPF0301 protein Bcen_0382 (192 aa).

This sequence belongs to the UPF0301 (AlgH) family.

The polypeptide is UPF0301 protein Bcen_0382 (Burkholderia orbicola (strain AU 1054)).